The following is a 326-amino-acid chain: Phospho-N-acetylmuramoyl-pentapeptide-transferase (326 aa).

Helical transmembrane passes span 4 to 24 (IWVA…LVIP), 49 to 69 (TPTM…FLLI), 74 to 94 (GLIV…DDYI), 109 to 129 (KLLG…FEAG), 151 to 171 (LGWW…SNAV), 179 to 199 (GLAA…ALAA), 203 to 223 (GVAA…FFNF), 228 to 248 (VFMG…AAVV), 254 to 274 (LFLI…IQVI), and 303 to 323 (VVIT…AGLY).

Belongs to the glycosyltransferase 4 family. MraY subfamily. Mg(2+) serves as cofactor.

It localises to the cell membrane. The catalysed reaction is UDP-N-acetyl-alpha-D-muramoyl-L-alanyl-gamma-D-glutamyl-meso-2,6-diaminopimeloyl-D-alanyl-D-alanine + di-trans,octa-cis-undecaprenyl phosphate = di-trans,octa-cis-undecaprenyl diphospho-N-acetyl-alpha-D-muramoyl-L-alanyl-D-glutamyl-meso-2,6-diaminopimeloyl-D-alanyl-D-alanine + UMP. The protein operates within cell wall biogenesis; peptidoglycan biosynthesis. Catalyzes the initial step of the lipid cycle reactions in the biosynthesis of the cell wall peptidoglycan: transfers peptidoglycan precursor phospho-MurNAc-pentapeptide from UDP-MurNAc-pentapeptide onto the lipid carrier undecaprenyl phosphate, yielding undecaprenyl-pyrophosphoryl-MurNAc-pentapeptide, known as lipid I. The polypeptide is Phospho-N-acetylmuramoyl-pentapeptide-transferase (Pelotomaculum thermopropionicum (strain DSM 13744 / JCM 10971 / SI)).